The primary structure comprises 442 residues: Histidine--tRNA ligase (442 aa).

Positions 416–442 are disordered; that stretch reads SGDETTVPVEEFPPEGGEELPTYEDYE. Residues 427-442 are compositionally biased toward acidic residues; the sequence is FPPEGGEELPTYEDYE.

It belongs to the class-II aminoacyl-tRNA synthetase family.

Its subcellular location is the cytoplasm. It catalyses the reaction tRNA(His) + L-histidine + ATP = L-histidyl-tRNA(His) + AMP + diphosphate + H(+). The sequence is that of Histidine--tRNA ligase from Halorubrum lacusprofundi (strain ATCC 49239 / DSM 5036 / JCM 8891 / ACAM 34).